Consider the following 607-residue polypeptide: Serum albumin (607 aa).

Residues 1–16 (MKWTILTALLIISAES) form the signal peptide. Residues 17 to 20 (KNLY) constitute a propeptide that is removed on maturation. Albumin domains are found at residues 19 to 209 (LYKR…TQLK), 210 to 401 (KALH…HVLA), and 403 to 600 (AIKE…ILIE). Cu cation is bound at residue His27. 17 disulfide bridges follow: Cys77–Cys86, Cys99–Cys115, Cys114–Cys125, Cys147–Cys192, Cys191–Cys200, Cys223–Cys269, Cys268–Cys276, Cys288–Cys302, Cys301–Cys312, Cys339–Cys384, Cys383–Cys392, Cys415–Cys461, Cys460–Cys471, Cys484–Cys500, Cys499–Cys510, Cys537–Cys582, and Cys581–Cys590. Zn(2+) is bound by residues His270 and Asp272. Asp272 and Glu275 together coordinate Ca(2+).

Belongs to the ALB/AFP/VDB family. In terms of tissue distribution, plasma. In the skin, widely distributed around the membranes of epithelial layer cells and within the stratum spongiosum of the dermis (at protein level).

Its subcellular location is the secreted. Its function is as follows. Serum albumin, the main protein of plasma, has a good binding capacity for water, Ca(2+), Na(+), K(+), fatty acids, hormones, bilirubin and drugs. Its main function is the regulation of the colloidal osmotic pressure of blood. Potent inhibitor of trypsin but has no inhibitory effect on thrombin, chymotrypsin, elastase and subtilisin. This Bombina maxima (Giant fire-bellied toad) protein is Serum albumin.